A 353-amino-acid polypeptide reads, in one-letter code: Photosystem II D2 protein (353 aa).

N-acetylthreonine is present on Thr-2. Thr-2 bears the Phosphothreonine mark. A helical membrane pass occupies residues 41-61 (CAYFALGGWFTGTTFVTSWYT). Chlorophyll a is bound at residue His-118. The helical transmembrane segment at 125–141 (GFMLRQFELARSVQLRP) threads the bilayer. Pheophytin a contacts are provided by Gln-130 and Asn-143. A helical membrane pass occupies residues 153 to 166 (VFVSVFLIYPLGQS). Residue His-198 coordinates chlorophyll a. Residues 208–228 (AALLCAIHGATVENTLFEDGD) traverse the membrane as a helical segment. Positions 215 and 262 each coordinate a plastoquinone. His-215 contributes to the Fe cation binding site. His-269 provides a ligand contact to Fe cation. Residues 279–295 (GLWMSAIGVVGLALNLR) form a helical membrane-spanning segment.

This sequence belongs to the reaction center PufL/M/PsbA/D family. PSII is composed of 1 copy each of membrane proteins PsbA, PsbB, PsbC, PsbD, PsbE, PsbF, PsbH, PsbI, PsbJ, PsbK, PsbL, PsbM, PsbT, PsbX, PsbY, PsbZ, Psb30/Ycf12, at least 3 peripheral proteins of the oxygen-evolving complex and a large number of cofactors. It forms dimeric complexes. The D1/D2 heterodimer binds P680, chlorophylls that are the primary electron donor of PSII, and subsequent electron acceptors. It shares a non-heme iron and each subunit binds pheophytin, quinone, additional chlorophylls, carotenoids and lipids. There is also a Cl(-1) ion associated with D1 and D2, which is required for oxygen evolution. The PSII complex binds additional chlorophylls, carotenoids and specific lipids. is required as a cofactor.

It localises to the plastid. It is found in the chloroplast thylakoid membrane. The catalysed reaction is 2 a plastoquinone + 4 hnu + 2 H2O = 2 a plastoquinol + O2. Functionally, photosystem II (PSII) is a light-driven water:plastoquinone oxidoreductase that uses light energy to abstract electrons from H(2)O, generating O(2) and a proton gradient subsequently used for ATP formation. It consists of a core antenna complex that captures photons, and an electron transfer chain that converts photonic excitation into a charge separation. The D1/D2 (PsbA/PsbD) reaction center heterodimer binds P680, the primary electron donor of PSII as well as several subsequent electron acceptors. D2 is needed for assembly of a stable PSII complex. This chain is Photosystem II D2 protein, found in Saccharum hybrid (Sugarcane).